Here is a 1700-residue protein sequence, read N- to C-terminus: Rho guanine nucleotide exchange factor 28 (1700 aa).

The segment at Thr288–Arg343 is disordered. A phosphoserine mark is found at Ser312 and Ser314. The segment covering Pro330–Arg343 has biased composition (basic and acidic residues). At Ser478 the chain carries Phosphoserine. Residues Val483–Thr532 form a disordered region. Ser623 carries the phosphoserine modification. The segment at Arg651–Cys698 adopts a Phorbol-ester/DAG-type zinc-finger fold. In terms of domain architecture, DH spans Lys846–Lys1041. The 90-residue stretch at Ala1095–Val1184 folds into the PH domain. Disordered regions lie at residues Val1184–Ala1205 and Lys1289–Thr1328. The span at Glu1191–Ala1205 shows a compositional bias: basic and acidic residues. Residues Asp1292–Pro1301 are interaction with PTK2/FAK1; required for regulation of axonal branching and synapse formation. Positions Thr1309–Thr1325 are enriched in polar residues. Residues Ile1369–Leu1380 are mediates cytoplasmic retention and interaction with YWHAH. Positions Gln1421 to Gln1522 form a coiled coil. The tract at residues Gln1421 to Leu1700 is interaction with microtubules. Positions Gln1493–Leu1524 are RNA-binding. Ser1535 carries the post-translational modification Phosphoserine. Positions Phe1563 to Ser1576 are mediates cytoplasmic retention and interaction with MAPK8IP1. The interval Ser1602–Leu1700 is disordered. Ser1604 carries the post-translational modification Phosphoserine. The span at Asp1647 to Gln1663 shows a compositional bias: low complexity. Positions Arg1664 to Ala1675 are enriched in polar residues.

Homooligomer; forms some cytoplasmic aggregates. Forms a complex with MAPK8 and MAPK8IP1. Interacts with RHOA. Interacts with microtubules. Interacts with YWHAE and YWHAH. Interacts with PTK2/FAK1. Interacts with NEFL. Interacts with CTNND2; prevents interaction with RHOA. Phosphorylated on tyrosine upon stimulation of cells by laminin. In terms of tissue distribution, highly enriched in the brain (at protein level). Also detected in lung and kidney.

It localises to the cytoplasm. It is found in the cell membrane. In terms of biological role, functions as a RHOA-specific guanine nucleotide exchange factor regulating signaling pathways downstream of integrins and growth factor receptors. Functions in axonal branching, synapse formation and dendritic morphogenesis. Also functions in focal adhesion formation, cell motility and B-lymphocytes activation. May regulate NEFL expression and aggregation and play a role in apoptosis. The protein is Rho guanine nucleotide exchange factor 28 (Arhgef28) of Mus musculus (Mouse).